The sequence spans 207 residues: FMN-dependent NADH:quinone oxidoreductase 2 (207 aa).

Residues serine 10, 16–18 (SIS), 96–99 (MYNL), and 141–144 (SRGG) each bind FMN.

Belongs to the azoreductase type 1 family. In terms of assembly, homodimer. It depends on FMN as a cofactor.

The enzyme catalyses 2 a quinone + NADH + H(+) = 2 a 1,4-benzosemiquinone + NAD(+). It catalyses the reaction N,N-dimethyl-1,4-phenylenediamine + anthranilate + 2 NAD(+) = 2-(4-dimethylaminophenyl)diazenylbenzoate + 2 NADH + 2 H(+). Its function is as follows. Quinone reductase that provides resistance to thiol-specific stress caused by electrophilic quinones. In terms of biological role, also exhibits azoreductase activity. Catalyzes the reductive cleavage of the azo bond in aromatic azo compounds to the corresponding amines. This chain is FMN-dependent NADH:quinone oxidoreductase 2, found in Trichormus variabilis (strain ATCC 29413 / PCC 7937) (Anabaena variabilis).